Reading from the N-terminus, the 907-residue chain is Anaphase-promoting complex subunit 2 (907 aa).

Disordered stretches follow at residues 203–228 (NNSK…EEES) and 790–838 (NKEK…AKEK). Composition is skewed to acidic residues over residues 214–226 (QQEE…ENEE) and 804–830 (ENDD…EEEE).

This sequence belongs to the cullin family. In terms of assembly, the APC/C is composed of at least 13 subunits that stay tightly associated throughout the cell cycle: anapc1, anapc2, anapc3, anapc4, anapc5, anapc6, anapc7, anapc8, anapc10, anapc11, cdc20, cdc26 and cdh1.

It localises to the nucleus. It participates in protein modification; protein ubiquitination. Functionally, component of the anaphase promoting complex/cyclosome (APC/C), a cell cycle-regulated E3 ubiquitin-protein ligase complex that controls progression through mitosis and the G1 phase of the cell cycle. This chain is Anaphase-promoting complex subunit 2 (anapc2), found in Dictyostelium discoideum (Social amoeba).